The chain runs to 60 residues: Mastoparan-VT1 (60 aa).

A signal peptide spans 1–25; it reads MKNTILILFTAFIALLGFFGMSAEA. Positions 26–45 are excised as a propeptide; it reads LADLKADPLAGPNPDADPEA. AXPX repeat units lie at residues 31-34, 35-38, and 41-44; these read ADPL, AGPN, and ADPE. The residue at position 59 (Leu-59) is a Leucine amide.

The protein belongs to the MCD family. Mastoparan subfamily. Expressed by the venom gland.

The protein resides in the secreted. Its function is as follows. Antimicrobial peptide with activities against Gram-negative and Gram-positive bacteria and the fungi C.albicans and C.parapsilosis. Exhibits little hemolytic activity against washed human erythrocytes. Also acts as a mast cell degranulating peptide. Its mast cell degranulation activity may be related to the activation of G-protein coupled receptors in mast cells as well as interaction with other proteins located in cell endosomal membranes in the mast cells. Functionally, antimicrobial peptide with activities against Gram-negative and Gram-positive bacteria and the fungi C.albicans and C.parapsilosis. Exhibits little hemolytic activity against washed human erythrocytes. Also acts as a mast cell degranulating peptide. In Vespa tropica (Greater banded hornet), this protein is Mastoparan-VT1.